A 337-amino-acid chain; its full sequence is MTQPTARSIPLQVVSGDTAAPAPLQTGVKQIGGDKIHRSPVQFVDAPVLRKPSWIRVRIPSGNAVQNLKAKLRENRLVTVCEEASCPNIHECFSHGTATFMILGEVCTRRCSFCDVAHGRPKPPDANEPASLAITVADMGLKYVVVTSVDRDDLRDGGAQHFVDCISAIRTSSPNTRIEILTPDFRGKGRMDRALDILALSPPDVFNHNIETVPDLYPNVRPGADYQWSLTLLQRFKAQHPSIATKSGIMLGLGETMEQVQATLRDLRAHDVDMITIGQYLQPTPHHHPVMRYWTPEEYKALEEYGNALGFSHVASGPMVRSSYHADRQAAGAGVAA.

The [4Fe-4S] cluster site is built by Cys-81, Cys-86, Cys-92, Cys-107, Cys-111, Cys-114, and Ser-323. The 220-residue stretch at 93 to 312 (FSHGTATFMI…EEYGNALGFS (220 aa)) folds into the Radical SAM core domain.

This sequence belongs to the radical SAM superfamily. Lipoyl synthase family. [4Fe-4S] cluster is required as a cofactor.

The protein localises to the cytoplasm. The enzyme catalyses [[Fe-S] cluster scaffold protein carrying a second [4Fe-4S](2+) cluster] + N(6)-octanoyl-L-lysyl-[protein] + 2 oxidized [2Fe-2S]-[ferredoxin] + 2 S-adenosyl-L-methionine + 4 H(+) = [[Fe-S] cluster scaffold protein] + N(6)-[(R)-dihydrolipoyl]-L-lysyl-[protein] + 4 Fe(3+) + 2 hydrogen sulfide + 2 5'-deoxyadenosine + 2 L-methionine + 2 reduced [2Fe-2S]-[ferredoxin]. It functions in the pathway protein modification; protein lipoylation via endogenous pathway; protein N(6)-(lipoyl)lysine from octanoyl-[acyl-carrier-protein]: step 2/2. Catalyzes the radical-mediated insertion of two sulfur atoms into the C-6 and C-8 positions of the octanoyl moiety bound to the lipoyl domains of lipoate-dependent enzymes, thereby converting the octanoylated domains into lipoylated derivatives. The chain is Lipoyl synthase from Xanthomonas oryzae pv. oryzae (strain MAFF 311018).